The chain runs to 249 residues: Putative ABC transporter ATP-binding protein GSU1281 (249 aa).

The 231-residue stretch at valine 6–glutamate 236 folds into the ABC transporter domain. Glycine 39 to serine 46 serves as a coordination point for ATP.

Belongs to the ABC transporter superfamily.

The protein localises to the cell inner membrane. Its function is as follows. Probably part of an ABC transporter complex. Responsible for energy coupling to the transport system. This is Putative ABC transporter ATP-binding protein GSU1281 from Geobacter sulfurreducens (strain ATCC 51573 / DSM 12127 / PCA).